A 414-amino-acid chain; its full sequence is Isocitrate dehydrogenase [NADP] cytoplasmic (414 aa).

An N-acetylserine modification is found at Ser2. The residue at position 42 (Tyr42) is a Phosphotyrosine. 75-77 (TIT) contributes to the NADP(+) binding site. Thr77 serves as a coordination point for substrate. Lys81 carries the post-translational modification N6-acetyllysine. Arg82 lines the NADP(+) pocket. Residues 94-100 (SPNGTIR) and Arg109 each bind substrate. Lys126 is subject to N6-succinyllysine. Residues Arg132 and Lys212 each contribute to the substrate site. Residues Lys224, Lys233, and Lys243 each carry the N6-acetyllysine modification. Asp252 lines the Mn(2+) pocket. Lys260 is a binding site for NADP(+). Asp275 and Asp279 together coordinate Mn(2+). Residue 310–315 (GTVTRH) coordinates NADP(+). An N6-acetyllysine modification is found at Lys321. Asn328 lines the NADP(+) pocket. Ser389 is subject to Phosphoserine. The residue at position 400 (Lys400) is an N6-succinyllysine.

Belongs to the isocitrate and isopropylmalate dehydrogenases family. Homodimer. Requires Mg(2+) as cofactor. Mn(2+) serves as cofactor. Post-translationally, acetylation at Lys-374 dramatically reduces catalytic activity. Highly expressed in the liver followed by kidney, lower expression in spleen, brain and lung.

The protein resides in the cytoplasm. The protein localises to the cytosol. The catalysed reaction is D-threo-isocitrate + NADP(+) = 2-oxoglutarate + CO2 + NADPH. Irreversibly inhibited by Cd(2+) concentrations above 50 uM. In terms of biological role, catalyzes the NADP(+)-dependent oxidative decarboxylation of isocitrate (D-threo-isocitrate) to 2-ketoglutarate (2-oxoglutarate), which is required by other enzymes such as the phytanoyl-CoA dioxygenase. Plays a critical role in the generation of NADPH, an important cofactor in many biosynthesis pathways. May act as a corneal epithelial crystallin and may be involved in maintaining corneal epithelial transparency. In Mus musculus (Mouse), this protein is Isocitrate dehydrogenase [NADP] cytoplasmic (Idh1).